We begin with the raw amino-acid sequence, 78 residues long: Conotoxin CaFr179 (78 aa).

The first 19 residues, 1–19, serve as a signal peptide directing secretion; that stretch reads MSGLGIMVLTLLLLVFMEA. Residues 20–44 constitute a propeptide that is removed on maturation; that stretch reads SHQDAGEKQATQRDAINVRRRRSLA. 3 disulfide bridges follow: Cys52–Cys64, Cys56–Cys72, and Cys63–Cys76. Phe77 is modified (phenylalanine amide).

Belongs to the conotoxin O3 superfamily. In terms of tissue distribution, expressed by the venom duct.

It is found in the secreted. The protein is Conotoxin CaFr179 of Conus caracteristicus (Characteristic cone).